We begin with the raw amino-acid sequence, 260 residues long: Small ribosomal subunit protein uS2 (260 aa).

This sequence belongs to the universal ribosomal protein uS2 family.

This chain is Small ribosomal subunit protein uS2, found in Roseobacter denitrificans (strain ATCC 33942 / OCh 114) (Erythrobacter sp. (strain OCh 114)).